The primary structure comprises 586 residues: Glutathione hydrolase 5 proenzyme (586 aa).

The Cytoplasmic portion of the chain corresponds to 1–8 (MARGYGAT). The helical; Signal-anchor for type II membrane protein transmembrane segment at 9 to 29 (VSLVLLGLGLALAVIVLAVVL) threads the bilayer. The Extracellular portion of the chain corresponds to 30 to 586 (SRHQAPCGPQ…LRKSGEAAGY (557 aa)). Asn98 is a glycosylation site (N-linked (GlcNAc...) asparagine). L-glutamate is bound at residue Arg110. Residues Asn204, Asn303, and Asn347 are each glycosylated (N-linked (GlcNAc...) asparagine). Thr388 acts as the Nucleophile in catalysis. Residues Thr406, Glu427, and 469 to 470 (SS) each bind L-glutamate. 2 N-linked (GlcNAc...) asparagine glycosylation sites follow: Asn535 and Asn550.

This sequence belongs to the gamma-glutamyltransferase family. As to quaternary structure, heterodimer composed of the light and heavy chains. The active site is located in the light chain. Post-translationally, cleaved by autocatalysis into a large and a small subunit. In terms of processing, glycosylated. In terms of tissue distribution, expressed in follicular dendritic cells in lymphoid follicles (at protein level).

Its subcellular location is the membrane. It carries out the reaction glutathione + H2O = L-cysteinylglycine + L-glutamate. The enzyme catalyses an S-substituted glutathione + H2O = an S-substituted L-cysteinylglycine + L-glutamate. It catalyses the reaction leukotriene C4 + H2O = leukotriene D4 + L-glutamate. The catalysed reaction is S-[(2E,6E,10E)-geranylgeranyl]-L-glutathione + H2O = S-[(2E,6E,10E)-geranylgeranyl]-L-cysteinylglycine + L-glutamate. It carries out the reaction an N-terminal (5-L-glutamyl)-[peptide] + an alpha-amino acid = 5-L-glutamyl amino acid + an N-terminal L-alpha-aminoacyl-[peptide]. Its pathway is sulfur metabolism; glutathione metabolism. It participates in lipid metabolism; leukotriene D4 biosynthesis. With respect to regulation, inhibited by serine-borate. Its function is as follows. Cleaves the gamma-glutamyl bond of extracellular glutathione tripeptide (gamma-Glu-Cys-Gly) and certain glutathione conjugates. Hydrolyzes glutathione releasing L-Glu and Cys-Gly dipeptide which is further metabolized to maintain extracellular cysteine levels but also to provide cysteine necessary for intracellular glutathione synthesis. Among glutathione-S-conjugates metabolizes leukotriene C4 (LTC4) and S-geranylgeranyl-glutathione (GGG), but is inactive toward gamma-glutamyl leucine. Converts extracellular LTC4 to LTD4 during acute inflammatory response. Acts as a negative regulator of GGG bioactivity. GGT5 (via GGG catabolism) and ABCC1 (via extracellular transport) establish GGG gradients within lymphoid tissues to position P2RY8-positive lymphocytes at germinal centers in lymphoid follicles and restrict their chemotactic transmigration from blood vessels to bone marrow parenchyma. The transpeptidation reaction, i.e. the transfer of gamma-glutamyl moiety to an acceptor molecule to yield a new gamma-glutamyl compound requires high concentration of dipeptide acceptor and is considered nonphysiological. This chain is Glutathione hydrolase 5 proenzyme (GGT5), found in Homo sapiens (Human).